We begin with the raw amino-acid sequence, 141 residues long: ATP synthase F(0) complex subunit C2, mitochondrial (141 aa).

Residues methionine 1–arginine 66 constitute a mitochondrion transit peptide. The chain crosses the membrane as a helical span at residues valine 82–tyrosine 102. An N6,N6,N6-trimethyllysine modification is found at lysine 109. Residues isoleucine 117–isoleucine 137 traverse the membrane as a helical segment.

This sequence belongs to the ATPase C chain family. As to quaternary structure, F-type ATPases have 2 components, CF(1) - the catalytic core - and CF(0) - the membrane proton channel. CF(1) has five subunits: alpha(3), beta(3), gamma(1), delta(1), epsilon(1). CF(0) has three main subunits: a, b and c. Interacts with DNAJC30; interaction is direct. Post-translationally, trimethylated by ATPSCKMT at Lys-109. Methylation is required for proper incorporation of the C subunit into the ATP synthase complex and mitochondrial respiration.

The protein localises to the mitochondrion membrane. In terms of biological role, mitochondrial membrane ATP synthase (F(1)F(0) ATP synthase or Complex V) produces ATP from ADP in the presence of a proton gradient across the membrane which is generated by electron transport complexes of the respiratory chain. F-type ATPases consist of two structural domains, F(1) - containing the extramembraneous catalytic core and F(0) - containing the membrane proton channel, linked together by a central stalk and a peripheral stalk. During catalysis, ATP synthesis in the catalytic domain of F(1) is coupled via a rotary mechanism of the central stalk subunits to proton translocation. Part of the complex F(0) domain. A homomeric c-ring of probably 10 subunits is part of the complex rotary element. This Pongo abelii (Sumatran orangutan) protein is ATP synthase F(0) complex subunit C2, mitochondrial.